The following is a 276-amino-acid chain: Halorhodopsin (276 aa).

Residues 1 to 21 (MTAASTTATTMLQATQSDVLQ) constitute a propeptide that is removed on maturation. Over 22 to 25 (EIQS) the chain is Extracellular. A helical membrane pass occupies residues 26 to 51 (NFLLNSSIWVNIALAGVVILLFVAMG). Topologically, residues 52-57 (RDIESP) are cytoplasmic. A helical transmembrane segment spans residues 58-81 (RAKLIWVATMLVPLVSISSYAGLA). Residues 82–105 (SGLTVGFLQMPPGHALAGQEVLSP) are Extracellular-facing. A helical transmembrane segment spans residues 106 to 127 (WGRYLTWTFSTPMILLALGLLA). At 128–130 (DTD) the chain is on the cytoplasmic side. A helical transmembrane segment spans residues 131–154 (IASLFTAITMDIGMCVTGLAAALI). Over 155-157 (TSS) the chain is Extracellular. Residues 158-180 (HLLRWVFYGISCAFFVAVLYVLL) form a helical membrane-spanning segment. Over 181–192 (VQWPADAEAAGT) the chain is Cytoplasmic. A helical transmembrane segment spans residues 193–216 (SEIFGTLKILTVVLWLGYPILWAL). The Extracellular portion of the chain corresponds to 217 to 225 (GSEGVALLS). A helical transmembrane segment spans residues 226–254 (VGVTSWGYSGLDILAKYVFAFLLLRWVAA). Lys-241 is subject to N6-(retinylidene)lysine. The Cytoplasmic segment spans residues 255–276 (NEGAVSGSGMSIGSGGAAPADD).

Belongs to the archaeal/bacterial/fungal opsin family.

The protein localises to the cell membrane. Light-driven chloride pump. This chain is Halorhodopsin (hop), found in Halobacterium halobium (strain port).